A 262-amino-acid chain; its full sequence is tRNA (guanine-N(1)-)-methyltransferase (262 aa).

S-adenosyl-L-methionine-binding positions include Gly112 and 132 to 137 (IGDYIL).

This sequence belongs to the RNA methyltransferase TrmD family. In terms of assembly, homodimer.

The protein resides in the cytoplasm. The catalysed reaction is guanosine(37) in tRNA + S-adenosyl-L-methionine = N(1)-methylguanosine(37) in tRNA + S-adenosyl-L-homocysteine + H(+). Specifically methylates guanosine-37 in various tRNAs. This Desulfatibacillum aliphaticivorans protein is tRNA (guanine-N(1)-)-methyltransferase.